A 280-amino-acid chain; its full sequence is GTP-binding protein rhoC (280 aa).

Residues 13 to 59 (TSRRHSLVTPPPSVAPRQNRMRSQSVRVSNGTVSTDNSMSSGRVSEA) form a disordered region. Positions 33 to 59 (MRSQSVRVSNGTVSTDNSMSSGRVSEA) are enriched in polar residues. 76–83 (GDGGCGKT) provides a ligand contact to GTP. The Effector region motif lies at 98–106 (YVPTVFENY). GTP contacts are provided by residues 125–129 (DTAGQ) and 183–186 (LKSD). Positions 251-275 (WDTRLPSSSGKPGGKPIGGKKIKKR) are disordered. Cys-277 carries the post-translational modification Cysteine methyl ester. Cys-277 is lipidated: S-geranylgeranyl cysteine. A propeptide spans 278–280 (KIL) (removed in mature form).

This sequence belongs to the small GTPase superfamily. Rho family.

It is found in the cell membrane. The sequence is that of GTP-binding protein rhoC (rhoC) from Emericella nidulans (strain FGSC A4 / ATCC 38163 / CBS 112.46 / NRRL 194 / M139) (Aspergillus nidulans).